Reading from the N-terminus, the 258-residue chain is 5'-nucleotidase SurE (258 aa).

A divalent metal cation is bound by residues Asp-16, Asp-17, Ser-47, and Asn-99.

This sequence belongs to the SurE nucleotidase family. It depends on a divalent metal cation as a cofactor.

The protein localises to the cytoplasm. It carries out the reaction a ribonucleoside 5'-phosphate + H2O = a ribonucleoside + phosphate. In terms of biological role, nucleotidase that shows phosphatase activity on nucleoside 5'-monophosphates. The sequence is that of 5'-nucleotidase SurE from Coxiella burnetii (strain Dugway 5J108-111).